A 456-amino-acid polypeptide reads, in one-letter code: uncharacterized protein (456 aa).

Helical transmembrane passes span 12–32, 63–83, 86–106, 143–163, 179–199, 208–228, 237–257, 305–325, 348–368, 390–410, and 414–434; these read SFIW…YLTL, FAAL…VGVA, VQAG…LGMA, WLAK…IGTF, IPVL…ILGG, SVIV…IILL, ILLI…AVGL, FLDT…TGAW, IGAT…ILGW, LAYI…IWII, and VNGL…KVII.

It belongs to the alanine or glycine:cation symporter (AGCS) (TC 2.A.25) family.

It is found in the cell inner membrane. This is an uncharacterized protein from Haemophilus influenzae (strain ATCC 51907 / DSM 11121 / KW20 / Rd).